Here is a 316-residue protein sequence, read N- to C-terminus: L-lactate dehydrogenase 1 (316 aa).

Positions 17, 38, 43, and 69 each coordinate NAD(+). Substrate is bound by residues R92 and 124-127; that span reads NPVD. NAD(+) is bound by residues 122–124 and T147; that span reads VSN. 152–155 provides a ligand contact to substrate; the sequence is DTSR. The active-site Proton acceptor is the H179. A substrate-binding site is contributed by T234.

This sequence belongs to the LDH/MDH superfamily. LDH family. Homotetramer.

It localises to the cytoplasm. The catalysed reaction is (S)-lactate + NAD(+) = pyruvate + NADH + H(+). The protein operates within fermentation; pyruvate fermentation to lactate; (S)-lactate from pyruvate: step 1/1. Functionally, catalyzes the conversion of lactate to pyruvate. The polypeptide is L-lactate dehydrogenase 1 (Bifidobacterium longum subsp. longum (strain ATCC 15707 / DSM 20219 / JCM 1217 / NCTC 11818 / E194b)).